We begin with the raw amino-acid sequence, 177 residues long: Large ribosomal subunit protein uL6 (177 aa).

This sequence belongs to the universal ribosomal protein uL6 family. Part of the 50S ribosomal subunit.

In terms of biological role, this protein binds to the 23S rRNA, and is important in its secondary structure. It is located near the subunit interface in the base of the L7/L12 stalk, and near the tRNA binding site of the peptidyltransferase center. This chain is Large ribosomal subunit protein uL6, found in Verminephrobacter eiseniae (strain EF01-2).